The following is a 127-amino-acid chain: Ribosome-binding factor A (127 aa).

This sequence belongs to the RbfA family. In terms of assembly, monomer. Binds 30S ribosomal subunits, but not 50S ribosomal subunits or 70S ribosomes.

The protein resides in the cytoplasm. In terms of biological role, one of several proteins that assist in the late maturation steps of the functional core of the 30S ribosomal subunit. Associates with free 30S ribosomal subunits (but not with 30S subunits that are part of 70S ribosomes or polysomes). Required for efficient processing of 16S rRNA. May interact with the 5'-terminal helix region of 16S rRNA. This Chloroflexus aurantiacus (strain ATCC 29366 / DSM 635 / J-10-fl) protein is Ribosome-binding factor A.